We begin with the raw amino-acid sequence, 168 residues long: uncharacterized protein (168 aa).

Positions 1 to 15 (MKEASDREEAPKMVE) are enriched in basic and acidic residues. Residues 1-36 (MKEASDREEAPKMVEKNYSTGFRKAHGEKDQSVTKP) are disordered.

It localises to the cytoplasm. This is an uncharacterized protein from Saccharomyces cerevisiae (strain ATCC 204508 / S288c) (Baker's yeast).